The following is a 121-amino-acid chain: Large ribosomal subunit protein bL12 (121 aa).

Belongs to the bacterial ribosomal protein bL12 family. Homodimer. Part of the ribosomal stalk of the 50S ribosomal subunit. Forms a multimeric L10(L12)X complex, where L10 forms an elongated spine to which 2 to 4 L12 dimers bind in a sequential fashion. Binds GTP-bound translation factors.

Its function is as follows. Forms part of the ribosomal stalk which helps the ribosome interact with GTP-bound translation factors. Is thus essential for accurate translation. In Streptococcus uberis (strain ATCC BAA-854 / 0140J), this protein is Large ribosomal subunit protein bL12.